Consider the following 87-residue polypeptide: UPF0335 protein Avi_3695 (87 aa).

It belongs to the UPF0335 family.

In Allorhizobium ampelinum (strain ATCC BAA-846 / DSM 112012 / S4) (Agrobacterium vitis (strain S4)), this protein is UPF0335 protein Avi_3695.